We begin with the raw amino-acid sequence, 109 residues long: Ycf20-like protein (109 aa).

The protein belongs to the ycf20 family.

The chain is Ycf20-like protein from Synechocystis sp. (strain ATCC 27184 / PCC 6803 / Kazusa).